Reading from the N-terminus, the 113-residue chain is Large ribosomal subunit protein bL17 (113 aa).

This sequence belongs to the bacterial ribosomal protein bL17 family. In terms of assembly, part of the 50S ribosomal subunit. Contacts protein L32.

In Symbiobacterium thermophilum (strain DSM 24528 / JCM 14929 / IAM 14863 / T), this protein is Large ribosomal subunit protein bL17.